The primary structure comprises 509 residues: 2-isopropylmalate synthase (509 aa).

Residues 5–267 form the Pyruvate carboxyltransferase domain; it reads IQIFDTTLRD…QTALNLEETK (263 aa). Mn(2+) contacts are provided by Asp14, His202, His204, and Asn238. A regulatory domain region spans residues 391-509; the sequence is KLETLQLQYV…AAENVEKVGN (119 aa).

The protein belongs to the alpha-IPM synthase/homocitrate synthase family. LeuA type 1 subfamily. In terms of assembly, homodimer. Requires Mn(2+) as cofactor.

Its subcellular location is the cytoplasm. It catalyses the reaction 3-methyl-2-oxobutanoate + acetyl-CoA + H2O = (2S)-2-isopropylmalate + CoA + H(+). It functions in the pathway amino-acid biosynthesis; L-leucine biosynthesis; L-leucine from 3-methyl-2-oxobutanoate: step 1/4. Its function is as follows. Catalyzes the condensation of the acetyl group of acetyl-CoA with 3-methyl-2-oxobutanoate (2-ketoisovalerate) to form 3-carboxy-3-hydroxy-4-methylpentanoate (2-isopropylmalate). The sequence is that of 2-isopropylmalate synthase from Staphylococcus aureus (strain bovine RF122 / ET3-1).